A 446-amino-acid chain; its full sequence is Sensor-type histidine kinase PrrB (446 aa).

2 consecutive transmembrane segments (helical) span residues 19-39 (VVAT…VVWV) and 151-171 (LLIC…LAAF). The HAMP domain occupies 172–222 (AVRPFKQLAEQTRSIDAGDEAPRVEVHGASEAIEIAEAMRGMLQRIWNEQN). In terms of domain architecture, Histidine kinase spans 237-446 (VSSHELRTPL…RLVLRLPGPS (210 aa)). Histidine 240 bears the Phosphohistidine; by autocatalysis mark.

Post-translationally, autophosphorylated.

Its subcellular location is the cell membrane. The enzyme catalyses ATP + protein L-histidine = ADP + protein N-phospho-L-histidine.. Its function is as follows. Member of the two-component regulatory system PrrB/PrrA that is involved specifically in early intracellular multiplication of Mycobacterium and is essential for its viability. Functions as a sensor protein kinase which is autophosphorylated at a histidine residue and transfers its phosphate group to the conserved aspartic acid residue in the regulatory domain of PrrA. In turn, PrrA binds to the upstream promoter regions of target genes including itself to positively regulate their expression. The polypeptide is Sensor-type histidine kinase PrrB (prrB) (Mycobacterium bovis (strain ATCC BAA-935 / AF2122/97)).